Here is a 60-residue protein sequence, read N- to C-terminus: Mastoparan-B (60 aa).

The first 27 residues, 1–27 (MKNTILILFTAFIALLGFFGMSAEALA), serve as a signal peptide directing secretion. AXPX repeat units follow at residues 27–30 (ADPL), 31–34 (AEPL), 35–38 (ADPN), and 41–44 (ADPE). Residues 28 to 45 (DPLAEPLADPNAEADPEA) constitute a propeptide that is removed on maturation. L59 bears the Leucine amide mark.

It belongs to the MCD family. Mastoparan subfamily. In terms of tissue distribution, expressed by the venom gland.

It localises to the secreted. The protein localises to the target cell membrane. Functionally, antimicrobial and mast cell degranulating peptide. Has broad spectrum antibacterial activity against both Gram-positive (S.aureus MIC=96-128 ug/ml, S.xylosus MIC=2 ug/ml, S.alactolyticus MIC=32 ug/ml, and S.choleraesuis MIC=32 ug/ml) and Gram-negative bacteria (C.koseri MIC=6 ug/ml, E.coli MIC=3-16 ug/ml, K.pneumoniae MIC=128 ug/ml, P.aerugiosa MIC=128 ug/ml, S.typhimurium MIC=64 ug/ml, V.parahamelytics MIC=32 ug/ml, and S.enterica), as well as on fungi (C.albicans, C.glabrata, and C.neoformans). Does not show antimicrobial activity against S.mutans. Affects membrane permeability of E.coli. Also acts as a mast cell degranulating peptide, that causes liberation of histamine from rat peritoneal mast cells. Its mast cell degranulation activity may be related to the activation of G-protein coupled receptors in mast cells as well as interaction with other proteins located in cell endosomal membranes in the mast cells. Whether this peptide shows hemolytic activities is controversial, as Lin et al., 2011 and Ho et al., 1991 found a hemolytic activity on sheep, chicken and human erythrocytes, whereas Kim et al., 2016 found no hemolytic activity on human erythrocytes. In vivo, induces edema in the rat paw. This Vespa basalis (Hornet) protein is Mastoparan-B.